Here is a 304-residue protein sequence, read N- to C-terminus: DnaJ homolog subfamily C member 17 (304 aa).

A J domain is found at 11–76; the sequence is DLYALLGIEE…AARAAYDKVR (66 aa). A compositionally biased stretch (basic and acidic residues) spans 79–106; the sequence is KKQAAERTQKLDEKRKKVKLDLEARERQ. The segment at 79–145 is disordered; sequence KKQAAERTQK…SRQLEEQQRL (67 aa). Ser112 bears the Phosphoserine mark. Basic and acidic residues predominate over residues 118–145; the sequence is SRSTRTLEQEIERLREEGSRQLEEQQRL. The RRM domain occupies 178 to 249; the sequence is KCKKEDESKG…NPLKISWLEG (72 aa). Lys264 bears the N6-methyllysine mark.

The protein resides in the cytoplasm. Its subcellular location is the nucleus. In terms of biological role, may negatively affect PAX8-induced thyroglobulin/TG transcription. The polypeptide is DnaJ homolog subfamily C member 17 (DNAJC17) (Homo sapiens (Human)).